The following is a 468-amino-acid chain: Trehalose-2-sulfate acyltransferase PapA2 (468 aa).

Belongs to the PapA acyltransferase family.

It carries out the reaction 2-O-sulfo-alpha,alpha-trehalose + hexadecanoyl-CoA = 2-O-sulfo-2'-O-hexadecanoyl-alpha,alpha-trehalose + CoA. Catalyzes the acylation of trehalose-2-sulfate by adding the palmitoyl group at the 2'-position to yield the intermediate trehalose-2-sulfate-2'-palmitate (SL659). This chain is Trehalose-2-sulfate acyltransferase PapA2 (papA2), found in Mycobacterium tuberculosis (strain ATCC 25177 / H37Ra).